Here is a 715-residue protein sequence, read N- to C-terminus: Polyribonucleotide nucleotidyltransferase (715 aa).

Residues D498 and D504 each contribute to the Mg(2+) site. The 61-residue stretch at 565-625 (PKVCMMQIKP…ETVKKTVAFI (61 aa)) folds into the KH domain. The 75-residue stretch at 635 to 709 (GTCYQASILR…RIDFLLLPKK (75 aa)) folds into the S1 motif domain.

The protein belongs to the polyribonucleotide nucleotidyltransferase family. Mg(2+) serves as cofactor.

The protein resides in the cytoplasm. It catalyses the reaction RNA(n+1) + phosphate = RNA(n) + a ribonucleoside 5'-diphosphate. In terms of biological role, involved in mRNA degradation. Catalyzes the phosphorolysis of single-stranded polyribonucleotides processively in the 3'- to 5'-direction. The polypeptide is Polyribonucleotide nucleotidyltransferase (Aster yellows witches'-broom phytoplasma (strain AYWB)).